We begin with the raw amino-acid sequence, 364 residues long: Peptide chain release factor 1 (364 aa).

Q238 carries the N5-methylglutamine modification. Over residues D286–R297 the composition is skewed to basic and acidic residues. The tract at residues D286 to Y315 is disordered.

Belongs to the prokaryotic/mitochondrial release factor family. Methylated by PrmC. Methylation increases the termination efficiency of RF1.

It is found in the cytoplasm. Its function is as follows. Peptide chain release factor 1 directs the termination of translation in response to the peptide chain termination codons UAG and UAA. This Idiomarina loihiensis (strain ATCC BAA-735 / DSM 15497 / L2-TR) protein is Peptide chain release factor 1.